The sequence spans 784 residues: DNA ligase (784 aa).

NAD(+)-binding positions include 31–35 (DAEYD), 80–81 (SL), and glutamate 120. Catalysis depends on lysine 122, which acts as the N6-AMP-lysine intermediate. Residues arginine 143, glutamate 180, lysine 296, and lysine 320 each contribute to the NAD(+) site. Cysteine 414, cysteine 417, cysteine 444, and cysteine 450 together coordinate Zn(2+). The BRCT domain maps to 701–784 (AEGLPLAGQT…AFMAEQGITL (84 aa)).

The protein belongs to the NAD-dependent DNA ligase family. LigA subfamily. Requires Mg(2+) as cofactor. Mn(2+) serves as cofactor.

The enzyme catalyses NAD(+) + (deoxyribonucleotide)n-3'-hydroxyl + 5'-phospho-(deoxyribonucleotide)m = (deoxyribonucleotide)n+m + AMP + beta-nicotinamide D-nucleotide.. In terms of biological role, DNA ligase that catalyzes the formation of phosphodiester linkages between 5'-phosphoryl and 3'-hydroxyl groups in double-stranded DNA using NAD as a coenzyme and as the energy source for the reaction. It is essential for DNA replication and repair of damaged DNA. The chain is DNA ligase from Pseudomonas entomophila (strain L48).